The sequence spans 465 residues: MTLFSCSVQMPLEERSLTNLPLNLLFRILSHLDMNDLQNIGKTCTLLRMLANENIVYRNAVIGSNGNMWWTKNVLVDVFDVLNFNRKAMKTLNSHNISLVASLRNVQRKYKLGVIDPARKTISYRTNEVESKEKGSVKDLNMDLNEPTEITREQIAHTAILQGMNQFIELNDKAFRTHSADSDDTYIEENNGEIHSLHGLEKNTTFEEDLVKKPPFIPSPTFSNYSRSSTNSVFSSSSPKLLDDDWNNITMDFTKSRDPDYKEMTPTSTESSDSITRLRKSNKVKDKAELFEKLIFRDSRPLKTKKKDNPRLKLSSSLSANDEDFRKIISPPSDILPKVGRRSVSRGYLEEIERHYPDFNGETTNPLAIKRVNSTKIANYEQLIIKENSSNCKGITEKNDENKFQRSHTSPVIELSKPHQRSKLKAVVTDGNKICYRKIELDNPSGSNTNDHVIKRLDANTDFNI.

An F-box domain is found at 14 to 60; the sequence is ERSLTNLPLNLLFRILSHLDMNDLQNIGKTCTLLRMLANENIVYRNA. Residues 253 to 279 are disordered; it reads FTKSRDPDYKEMTPTSTESSDSITRLR. A compositionally biased stretch (basic and acidic residues) spans 254–263; the sequence is TKSRDPDYKE. Polar residues predominate over residues 265–275; sequence TPTSTESSDSI.

The protein resides in the mitochondrion. This Saccharomyces cerevisiae (strain ATCC 204508 / S288c) (Baker's yeast) protein is Mitochondrial F-box protein MFB1 (MFB1).